Reading from the N-terminus, the 156-residue chain is Ribosomal RNA large subunit methyltransferase H (156 aa).

S-adenosyl-L-methionine contacts are provided by residues L73, G104, and 123 to 128; that span reads LSPLTL.

This sequence belongs to the RNA methyltransferase RlmH family. In terms of assembly, homodimer.

The protein localises to the cytoplasm. It carries out the reaction pseudouridine(1915) in 23S rRNA + S-adenosyl-L-methionine = N(3)-methylpseudouridine(1915) in 23S rRNA + S-adenosyl-L-homocysteine + H(+). In terms of biological role, specifically methylates the pseudouridine at position 1915 (m3Psi1915) in 23S rRNA. This Yersinia enterocolitica serotype O:8 / biotype 1B (strain NCTC 13174 / 8081) protein is Ribosomal RNA large subunit methyltransferase H.